The sequence spans 212 residues: Noggin-2 (212 aa).

An N-terminal signal peptide occupies residues 1 to 23 (MGSITRALPLLLLLLLCAHGTAS). The segment at 37 to 56 (LPVPDLIENPDPEHDPREQD) is disordered. The segment covering 47–56 (DPEHDPREQD) has biased composition (basic and acidic residues). Asn-84 carries an N-linked (GlcNAc...) asparagine glycan.

It belongs to the noggin family. As to quaternary structure, homodimer; disulfide-linked.

The protein resides in the secreted. Its function is as follows. Inhibitor of bone morphogenetic proteins (BMP) signaling. In Danio rerio (Zebrafish), this protein is Noggin-2 (nog2).